The primary structure comprises 289 residues: Arabinogalactan O-methyltransferase 1 (289 aa).

The helical transmembrane segment at 12-32 (IITGVLLAGLVGGALLFTSFI) threads the bilayer.

Belongs to the methyltransferase superfamily. Binds to the translation initiation factors TIF3E1.

It localises to the golgi apparatus membrane. Its function is as follows. Involved in the methylation of glucuronic acid of different plant cell wall component, but mainly on side chains of arabinogalactans. This Arabidopsis thaliana (Mouse-ear cress) protein is Arabinogalactan O-methyltransferase 1 (AGM1).